The primary structure comprises 108 residues: UPF0235 protein APE_0182.1 (108 aa).

This sequence belongs to the UPF0235 family.

This is UPF0235 protein APE_0182.1 from Aeropyrum pernix (strain ATCC 700893 / DSM 11879 / JCM 9820 / NBRC 100138 / K1).